The primary structure comprises 157 residues: Arginine repressor (157 aa).

Belongs to the ArgR family.

Its subcellular location is the cytoplasm. It functions in the pathway amino-acid biosynthesis; L-arginine biosynthesis [regulation]. In terms of biological role, regulates arginine biosynthesis genes. In Deinococcus radiodurans (strain ATCC 13939 / DSM 20539 / JCM 16871 / CCUG 27074 / LMG 4051 / NBRC 15346 / NCIMB 9279 / VKM B-1422 / R1), this protein is Arginine repressor.